Here is a 243-residue protein sequence, read N- to C-terminus: 1-(5-phosphoribosyl)-5-[(5-phosphoribosylamino)methylideneamino] imidazole-4-carboxamide isomerase (243 aa).

The active-site Proton acceptor is the Asp-8. Catalysis depends on Asp-129, which acts as the Proton donor.

Belongs to the HisA/HisF family.

The protein resides in the cytoplasm. It catalyses the reaction 1-(5-phospho-beta-D-ribosyl)-5-[(5-phospho-beta-D-ribosylamino)methylideneamino]imidazole-4-carboxamide = 5-[(5-phospho-1-deoxy-D-ribulos-1-ylimino)methylamino]-1-(5-phospho-beta-D-ribosyl)imidazole-4-carboxamide. It participates in amino-acid biosynthesis; L-histidine biosynthesis; L-histidine from 5-phospho-alpha-D-ribose 1-diphosphate: step 4/9. In Parvibaculum lavamentivorans (strain DS-1 / DSM 13023 / NCIMB 13966), this protein is 1-(5-phosphoribosyl)-5-[(5-phosphoribosylamino)methylideneamino] imidazole-4-carboxamide isomerase.